A 380-amino-acid chain; its full sequence is MAIDPIKLSQELISFPSITPTDNGAIDFLSNTLSQYGFTCHVLTFGDDQVQVRNLYAQLGNGSPNLCFAGHTDVVPTGDSEKWKFDPFSGKIEDNILYGRGVVDMKSAICAFVAAVSRIDFNQINGSISFLISGDEEGNYFKYGTPAVLKWLTDNNKKIDFCLVGEPTSQSSVGDTIKIGRRGSINFKIVCNGVQGHVAYPHLAENPVDNMISILYKISNTVLDNGNEYFQPSNCEITSVDVGNTATNVIPDKITANLNIRYNDMHTSESLFNIINNICAEITEKYELFTAVSGSSFITHPGKHSDMLSSAIKKVTGQDAILSTSGGTSDARFIKDFCPVIELGLSNETAHKINEHAPVDDIYKLTDIYEEFIRQFFNIS.

His71 is a Zn(2+) binding site. Residue Asp73 is part of the active site. Zn(2+) is bound at residue Asp104. Glu136 serves as the catalytic Proton acceptor. Zn(2+) is bound by residues Glu137, Glu166, and His351.

This sequence belongs to the peptidase M20A family. DapE subfamily. In terms of assembly, homodimer. Zn(2+) is required as a cofactor. It depends on Co(2+) as a cofactor.

The catalysed reaction is N-succinyl-(2S,6S)-2,6-diaminopimelate + H2O = (2S,6S)-2,6-diaminopimelate + succinate. The protein operates within amino-acid biosynthesis; L-lysine biosynthesis via DAP pathway; LL-2,6-diaminopimelate from (S)-tetrahydrodipicolinate (succinylase route): step 3/3. Functionally, catalyzes the hydrolysis of N-succinyl-L,L-diaminopimelic acid (SDAP), forming succinate and LL-2,6-diaminopimelate (DAP), an intermediate involved in the bacterial biosynthesis of lysine and meso-diaminopimelic acid, an essential component of bacterial cell walls. This Ehrlichia canis (strain Jake) protein is Succinyl-diaminopimelate desuccinylase.